A 102-amino-acid chain; its full sequence is Large ribosomal subunit protein bL21 (102 aa).

This sequence belongs to the bacterial ribosomal protein bL21 family. As to quaternary structure, part of the 50S ribosomal subunit. Contacts protein L20.

Its function is as follows. This protein binds to 23S rRNA in the presence of protein L20. This is Large ribosomal subunit protein bL21 from Campylobacter jejuni subsp. doylei (strain ATCC BAA-1458 / RM4099 / 269.97).